Reading from the N-terminus, the 94-residue chain is Co-chaperonin GroES (94 aa).

The protein belongs to the GroES chaperonin family. As to quaternary structure, heptamer of 7 subunits arranged in a ring. Interacts with the chaperonin GroEL.

Its subcellular location is the cytoplasm. Together with the chaperonin GroEL, plays an essential role in assisting protein folding. The GroEL-GroES system forms a nano-cage that allows encapsulation of the non-native substrate proteins and provides a physical environment optimized to promote and accelerate protein folding. GroES binds to the apical surface of the GroEL ring, thereby capping the opening of the GroEL channel. The chain is Co-chaperonin GroES from Bacillus sp. (strain PS3).